We begin with the raw amino-acid sequence, 215 residues long: 3-isopropylmalate dehydratase small subunit (215 aa).

It belongs to the LeuD family. LeuD type 1 subfamily. Heterodimer of LeuC and LeuD.

The catalysed reaction is (2R,3S)-3-isopropylmalate = (2S)-2-isopropylmalate. It participates in amino-acid biosynthesis; L-leucine biosynthesis; L-leucine from 3-methyl-2-oxobutanoate: step 2/4. Functionally, catalyzes the isomerization between 2-isopropylmalate and 3-isopropylmalate, via the formation of 2-isopropylmaleate. The polypeptide is 3-isopropylmalate dehydratase small subunit (Saccharophagus degradans (strain 2-40 / ATCC 43961 / DSM 17024)).